Here is a 374-residue protein sequence, read N- to C-terminus: MEMO1 family protein aq_1336 (374 aa).

This sequence belongs to the MEMO1 family.

The sequence is that of MEMO1 family protein aq_1336 from Aquifex aeolicus (strain VF5).